The chain runs to 80 residues: Small ribosomal subunit protein bS21 (80 aa).

It belongs to the bacterial ribosomal protein bS21 family.

The sequence is that of Small ribosomal subunit protein bS21 from Rhodospirillum rubrum (strain ATCC 11170 / ATH 1.1.1 / DSM 467 / LMG 4362 / NCIMB 8255 / S1).